The chain runs to 150 residues: Large ribosomal subunit protein bL9 (150 aa).

The protein belongs to the bacterial ribosomal protein bL9 family.

Binds to the 23S rRNA. The protein is Large ribosomal subunit protein bL9 of Alkalilimnicola ehrlichii (strain ATCC BAA-1101 / DSM 17681 / MLHE-1).